The following is a 459-amino-acid chain: Transcription factor AP-2-beta (459 aa).

Residue K21 forms a Glycyl lysine isopeptide (Lys-Gly) (interchain with G-Cter in SUMO) linkage. Positions 30 to 139 are disordered; that stretch reads HDGVPSHSSR…PQLSGLDPRR (110 aa). Polar residues predominate over residues 35-51; it reads SHSSRLSQLGSVSQGPY. Low complexity predominate over residues 121 to 132; sequence LLPQPRAALPQL. Residue S258 is modified to Phosphoserine; by PKA. The segment at 299–429 is H-S-H (helix-span-helix), dimerization; the sequence is RRKAANVTLL…YLTEALKGMD (131 aa). Positions 435–459 are disordered; sequence NTTNRHTSGEGPGSKTGDKEEKHRK. A compositionally biased stretch (basic and acidic residues) spans 450-459; the sequence is TGDKEEKHRK.

The protein belongs to the AP-2 family. Binds DNA as a dimer. Can form homodimers or heterodimers with other AP-2 family members. Interacts with CITED4. Interacts with UBE2I. Interacts with KCTD1; this interaction represses transcription activation. Interacts with CITED2 (via C-terminus); the interaction stimulates TFAP2B-transcriptional activity. In terms of processing, sumoylated. Sumoylated on Lys-21; which inhibits transcriptional activity. Localizes to neurons in areas of the cerebral cortex, cerebellum and hypothalamus (at protein level).

The protein resides in the nucleus. Its function is as follows. Sequence-specific DNA-binding protein that interacts with inducible viral and cellular enhancer elements to regulate transcription of selected genes. AP-2 factors bind to the consensus sequence 5'-GCCNNNGGC-3' and activate genes involved in a large spectrum of important biological functions including proper eye, face, body wall, limb and neural tube development. They also suppress a number of genes including MCAM/MUC18, C/EBP alpha and MYC. AP-2-beta appears to be required for normal face and limb development and for proper terminal differentiation and function of renal tubular epithelia. The polypeptide is Transcription factor AP-2-beta (Tfap2b) (Mus musculus (Mouse)).